A 177-amino-acid chain; its full sequence is Peptide methionine sulfoxide reductase MsrA (177 aa).

The active site involves Cys11.

It belongs to the MsrA Met sulfoxide reductase family.

It carries out the reaction L-methionyl-[protein] + [thioredoxin]-disulfide + H2O = L-methionyl-(S)-S-oxide-[protein] + [thioredoxin]-dithiol. It catalyses the reaction [thioredoxin]-disulfide + L-methionine + H2O = L-methionine (S)-S-oxide + [thioredoxin]-dithiol. In terms of biological role, has an important function as a repair enzyme for proteins that have been inactivated by oxidation. Catalyzes the reversible oxidation-reduction of methionine sulfoxide in proteins to methionine. This Trichodesmium erythraeum (strain IMS101) protein is Peptide methionine sulfoxide reductase MsrA.